Consider the following 215-residue polypeptide: Cytochrome b6 (215 aa).

Residues 32-52 (IFYCLGGITLTCFLVQVATGF) form a helical membrane-spanning segment. Residue Cys-35 coordinates heme c. Heme b contacts are provided by His-86 and His-100. The next 3 helical transmembrane spans lie at 90–110 (ASMM…TGGF), 116–136 (LTWV…VTGY), and 186–206 (LHTF…FLMI). Heme b-binding residues include His-187 and His-202.

This sequence belongs to the cytochrome b family. PetB subfamily. As to quaternary structure, the 4 large subunits of the cytochrome b6-f complex are cytochrome b6, subunit IV (17 kDa polypeptide, PetD), cytochrome f and the Rieske protein, while the 4 small subunits are PetG, PetL, PetM and PetN. The complex functions as a dimer. Requires heme b as cofactor. The cofactor is heme c.

It is found in the plastid. The protein resides in the chloroplast thylakoid membrane. Component of the cytochrome b6-f complex, which mediates electron transfer between photosystem II (PSII) and photosystem I (PSI), cyclic electron flow around PSI, and state transitions. The polypeptide is Cytochrome b6 (Pisum sativum (Garden pea)).